We begin with the raw amino-acid sequence, 886 residues long: Alanine--tRNA ligase (886 aa).

His564, His568, Cys676, and His680 together coordinate Zn(2+).

It belongs to the class-II aminoacyl-tRNA synthetase family. Zn(2+) serves as cofactor.

It is found in the cytoplasm. The catalysed reaction is tRNA(Ala) + L-alanine + ATP = L-alanyl-tRNA(Ala) + AMP + diphosphate. Catalyzes the attachment of alanine to tRNA(Ala) in a two-step reaction: alanine is first activated by ATP to form Ala-AMP and then transferred to the acceptor end of tRNA(Ala). Also edits incorrectly charged Ser-tRNA(Ala) and Gly-tRNA(Ala) via its editing domain. The sequence is that of Alanine--tRNA ligase from Bartonella bacilliformis.